A 282-amino-acid polypeptide reads, in one-letter code: Pseudokinase OPG198 (282 aa).

Residues Met-1 and Lys-30 each coordinate ATP. The Protein kinase domain occupies 1–282; sequence MESFKYCFDN…DRLRRLFIQD (282 aa).

The protein belongs to the protein kinase superfamily. Ser/Thr protein kinase family. Poxviruses subfamily. Interacts with B1/VPK1. Interacts with host VRK1. Interacts with host VRK2.

The protein resides in the host nucleus. With respect to regulation, both catalytically active kinases B1/VPK1 and host VRK2 repress B12 inhibitory activity in a B1/VPK1 deletion mutant strain. Its function is as follows. Pseudokinase that plays a role in viral DNA replication repression by activating the antiviral protein BANF1 and inhibiting the activity of host VRK1, a cellular modulator of BANF1. The sequence is that of Pseudokinase OPG198 (OPG198) from Cynomys gunnisoni (Gunnison's prairie dog).